The chain runs to 409 residues: NADH-quinone oxidoreductase subunit D (409 aa).

The protein belongs to the complex I 49 kDa subunit family. As to quaternary structure, NDH-1 is composed of 14 different subunits. Subunits NuoB, C, D, E, F, and G constitute the peripheral sector of the complex.

It is found in the cell inner membrane. It carries out the reaction a quinone + NADH + 5 H(+)(in) = a quinol + NAD(+) + 4 H(+)(out). In terms of biological role, NDH-1 shuttles electrons from NADH, via FMN and iron-sulfur (Fe-S) centers, to quinones in the respiratory chain. The immediate electron acceptor for the enzyme in this species is believed to be ubiquinone. Couples the redox reaction to proton translocation (for every two electrons transferred, four hydrogen ions are translocated across the cytoplasmic membrane), and thus conserves the redox energy in a proton gradient. The polypeptide is NADH-quinone oxidoreductase subunit D (Helicobacter pylori (strain Shi470)).